The primary structure comprises 580 residues: Arginine--tRNA ligase (580 aa).

The 'HIGH' region signature appears at 131 to 141 (ANPTGPMHVGH).

It belongs to the class-I aminoacyl-tRNA synthetase family. As to quaternary structure, monomer.

It localises to the cytoplasm. It catalyses the reaction tRNA(Arg) + L-arginine + ATP = L-arginyl-tRNA(Arg) + AMP + diphosphate. The protein is Arginine--tRNA ligase of Cereibacter sphaeroides (strain ATCC 17023 / DSM 158 / JCM 6121 / CCUG 31486 / LMG 2827 / NBRC 12203 / NCIMB 8253 / ATH 2.4.1.) (Rhodobacter sphaeroides).